The primary structure comprises 344 residues: MSMTPQKALQCIIEHREILQDEMVQLMRQIMNAEVSGIMVAAILAGLRVKKETVGEIAGAATVMREFSRKVNVQDRTHLVDIVGTGGDGWHTFNISTCAMFVAAAAGAKVAKHGNRSVSSKSGSADVLEALGASIELQPLEVAEVIGCIGVGFMFAPIHHPVMQVVSPVRREMGVRTIFNILGPLTNPADAPNILMGVFDPDLVGIQAHVLHKLGAERALVVCGRDGMDELSLGTTTLVGELRGGRVREYEVSPEDYGMAVSPISNLQVESPAESREMLLDVLAGQPGPALDVVALNAGAALYVAGVAQDIGHGVALAREVLFDGRARDILDRYVAFTRRPRYV.

Residues Gly84, 87–88 (GD), Thr92, 94–97 (NIST), 112–120 (KHGNRSVSS), and Ser124 each bind 5-phospho-alpha-D-ribose 1-diphosphate. Gly84 serves as a coordination point for anthranilate. Ser96 contacts Mg(2+). Asn115 is a binding site for anthranilate. Residue Arg170 coordinates anthranilate. Residues Asp229 and Glu230 each contribute to the Mg(2+) site.

It belongs to the anthranilate phosphoribosyltransferase family. In terms of assembly, homodimer. Requires Mg(2+) as cofactor.

The catalysed reaction is N-(5-phospho-beta-D-ribosyl)anthranilate + diphosphate = 5-phospho-alpha-D-ribose 1-diphosphate + anthranilate. It functions in the pathway amino-acid biosynthesis; L-tryptophan biosynthesis; L-tryptophan from chorismate: step 2/5. Its function is as follows. Catalyzes the transfer of the phosphoribosyl group of 5-phosphorylribose-1-pyrophosphate (PRPP) to anthranilate to yield N-(5'-phosphoribosyl)-anthranilate (PRA). In Xylella fastidiosa (strain 9a5c), this protein is Anthranilate phosphoribosyltransferase.